Reading from the N-terminus, the 1392-residue chain is FERM and PDZ domain-containing protein 2 (1392 aa).

Residues 15 to 197 (VTLASALQVR…SEVERRVVEE (183 aa)) form the KIND domain. The interval 211–246 (SRLHQADGESPGAPASDALQPRRVSERSAETQSSLE) is disordered. An FERM domain is found at 342 to 642 (CVVLLNGRCL…WFNAQTGSKH (301 aa)). A PDZ 1 domain is found at 775 to 861 (GLFGEPNQDI…MAVRMIQNSP (87 aa)). The disordered stretch occupies residues 903–930 (GRQSPHIHDQDRSVRGTEMAQGAGSCPP). Residues 908–917 (HIHDQDRSVR) are compositionally biased toward basic and acidic residues. Residues 937-1027 (TGEIYFVELV…VARLVLERRG (91 aa)) form an interaction with GRIN2A and GRIN2B region. PDZ domains lie at 950 to 1035 (GTLG…PQCP) and 1079 to 1167 (RGLG…PEME). Residues 1186 to 1236 (CAGSEQSPSLDQEDNWRDSTSLDAGEGLSPGPESSYKDVRQVKGDREKERP) form a disordered region. Over residues 1220 to 1236 (SYKDVRQVKGDREKERP) the composition is skewed to basic and acidic residues.

Interacts (via the second PDZ domain) with CTNND2 (via the extreme C-terminus). Interacts (via the second PDZ domain) with PKP4 (via the extreme C-terminus); the interaction directs FRMPD2 to the basolateral membranes. Interacts (via the second PDZ domain) with ARVCF (via the extreme C-terminus). Interacts (via the second PDZ domain) with NMDAR subunits GRIN2A/GLUN2A and GRIN2B/GLUN2B (via the extreme C-terminus); the interaction is direct and is likely to promote NMDAR-mediated neural signal transmission. Binds GRIN2A with lower affinity than GRIN2B. Interacts (via the third PDZ domain) with LRIT1 (via the extreme C-terminus); the interaction leads to their colocalization in photoreceptor synapses. Interacts with NOD2; the interaction is likely to trigger NOD2-mediated nuclear factor kappaB activation.

It localises to the cytoplasm. Its subcellular location is the postsynaptic density. It is found in the basolateral cell membrane. The protein localises to the cell junction. The protein resides in the tight junction. Functions as a scaffold protein and likely plays a role in N-methyl-D-aspartic acid receptor (NMDAR)-mediated synaptic excitatory transmission. May be involved in synapse formation in cone photoreceptor cells. May play a role in the regulation of tight junction formation. Binds phosphatidylinositol 3,4-bisphosphate (PtdIns(3,4)P2). May pNF-kappa-Blay a role in the regulation of NOD2-mediated NF-kappa-B activation in immune response. This is FERM and PDZ domain-containing protein 2 from Mus musculus (Mouse).